We begin with the raw amino-acid sequence, 956 residues long: Glycine dehydrogenase (decarboxylating) (956 aa).

Position 697 is an N6-(pyridoxal phosphate)lysine (K697).

The protein belongs to the GcvP family. In terms of assembly, the glycine cleavage system is composed of four proteins: P, T, L and H. Requires pyridoxal 5'-phosphate as cofactor.

It catalyses the reaction N(6)-[(R)-lipoyl]-L-lysyl-[glycine-cleavage complex H protein] + glycine + H(+) = N(6)-[(R)-S(8)-aminomethyldihydrolipoyl]-L-lysyl-[glycine-cleavage complex H protein] + CO2. The glycine cleavage system catalyzes the degradation of glycine. The P protein binds the alpha-amino group of glycine through its pyridoxal phosphate cofactor; CO(2) is released and the remaining methylamine moiety is then transferred to the lipoamide cofactor of the H protein. This Cereibacter sphaeroides (strain KD131 / KCTC 12085) (Rhodobacter sphaeroides) protein is Glycine dehydrogenase (decarboxylating).